The following is a 146-amino-acid chain: Large ribosomal subunit protein uL15 (146 aa).

Residues 1–51 (MQLNTIKPAEGSKKNRRHVGRGIGSGLGKTAGRGHKGQKSRSGGFHKVGFE) are disordered. Residues 21-31 (RGIGSGLGKTA) show a composition bias toward gly residues.

The protein belongs to the universal ribosomal protein uL15 family. Part of the 50S ribosomal subunit.

Its function is as follows. Binds to the 23S rRNA. The polypeptide is Large ribosomal subunit protein uL15 (Polynucleobacter necessarius subsp. necessarius (strain STIR1)).